A 189-amino-acid polypeptide reads, in one-letter code: Probable transcriptional regulator Rv1176c (189 aa).

Belongs to the PadR family. Homodimer.

It is found in the cytoplasm. Its function is as follows. Probable transcriptional regulator that may help mitigate the effect of oxidative stress and help mycobacteria survive inside macrophages. Binds to its own promoter region. The protein is Probable transcriptional regulator Rv1176c of Mycobacterium tuberculosis (strain ATCC 25618 / H37Rv).